Reading from the N-terminus, the 123-residue chain is uncharacterized protein (123 aa).

A disordered region spans residues 35 to 100; that stretch reads SQDHGDDPAE…SSGAPASQHC (66 aa). Over residues 37–48 the composition is skewed to basic and acidic residues; it reads DHGDDPAERGRT. The span at 85-97 shows a compositional bias: low complexity; sequence ALPASPSSGAPAS.

This is an uncharacterized protein from Homo sapiens (Human).